Reading from the N-terminus, the 154-residue chain is Sperm microtubule associated protein 1 (154 aa).

This Homo sapiens (Human) protein is Sperm microtubule associated protein 1.